Reading from the N-terminus, the 678-residue chain is THO complex subunit 5 homolog A (678 aa).

Disordered stretches follow at residues 1 to 35 and 294 to 329; these read MASD…YSEE and ALFK…VQLD. The short motif at 7–10 is the Nuclear localization signal element; it reads KKRK. Residues 14-35 show a composition bias toward basic and acidic residues; sequence NRNEDVKRGRHEDQEGRYYSEE. The span at 301-314 shows a compositional bias: acidic residues; sequence DSQDDESDSDAEEE.

Belongs to the THOC5 family. In terms of assembly, component of the THO subcomplex, which is composed of thoc1, thoc2, thoc3, thoc5, thoc6 and thoc7. Component of the transcription/export (TREX) complex at least composed of alyref/thoc4, ddx39b, sarnp/cip29, chtop and the THO subcomplex. Interacts with thoc7.

The protein resides in the nucleus. It localises to the nucleus speckle. It is found in the cytoplasm. Functionally, component of the THO subcomplex of the TREX complex which is thought to couple mRNA transcription, processing and nuclear export, and which specifically associates with spliced mRNA and not with unspliced pre-mRNA. Plays a key structural role in the oligomerization of the THO-ddx39b complex. TREX is recruited to spliced mRNAs by a transcription-independent mechanism, binds to mRNA upstream of the exon-junction complex (EJC) and is recruited in a splicing- and cap-dependent manner to a region near the 5' end of the mRNA where it functions in mRNA export to the cytoplasm via the TAP/NXF1 pathway. May be involved in cell differentiation. The chain is THO complex subunit 5 homolog A (thoc5-a) from Xenopus laevis (African clawed frog).